Reading from the N-terminus, the 102-residue chain is Complement inhibitor RaCI3 (102 aa).

Residues 1 to 24 form the signal peptide; sequence MAALNGLVLLLLTISAMFISECYS. 3 disulfides stabilise this stretch: C37–C61, C42–C63, and C57–C78.

The protein belongs to the RaCI family. In terms of tissue distribution, expressed in salivary glands.

The protein localises to the secreted. Its function is as follows. Complement inhibitor. Prevents complement-mediated C5 activation by binding to C5. Binds C5 at a different binding site than the other tick complement inhibitors OmCI and CirpT1, and the drug eculizumab. Inhibits complement in human and guinea pig but not in other species tested (rabbit, rat, mouse, and pig). The chain is Complement inhibitor RaCI3 from Dermacentor andersoni (Rocky mountain wood tick).